A 237-amino-acid chain; its full sequence is tRNA1(Val) (adenine(37)-N6)-methyltransferase (237 aa).

It belongs to the methyltransferase superfamily. tRNA (adenine-N(6)-)-methyltransferase family.

It is found in the cytoplasm. It catalyses the reaction adenosine(37) in tRNA1(Val) + S-adenosyl-L-methionine = N(6)-methyladenosine(37) in tRNA1(Val) + S-adenosyl-L-homocysteine + H(+). In terms of biological role, specifically methylates the adenine in position 37 of tRNA(1)(Val) (anticodon cmo5UAC). The protein is tRNA1(Val) (adenine(37)-N6)-methyltransferase of Tolumonas auensis (strain DSM 9187 / NBRC 110442 / TA 4).